A 261-amino-acid chain; its full sequence is Triosephosphate isomerase (261 aa).

10-12 serves as a coordination point for substrate; that stretch reads NWK. His100 (electrophile) is an active-site residue. The Proton acceptor role is filled by Glu172. Substrate is bound by residues Gly178, Ser218, and 239–240; that span reads GG.

Belongs to the triosephosphate isomerase family. Homodimer.

It is found in the cytoplasm. It carries out the reaction D-glyceraldehyde 3-phosphate = dihydroxyacetone phosphate. It participates in carbohydrate biosynthesis; gluconeogenesis. The protein operates within carbohydrate degradation; glycolysis; D-glyceraldehyde 3-phosphate from glycerone phosphate: step 1/1. Its function is as follows. Involved in the gluconeogenesis. Catalyzes stereospecifically the conversion of dihydroxyacetone phosphate (DHAP) to D-glyceraldehyde-3-phosphate (G3P). This is Triosephosphate isomerase from Mycobacterium tuberculosis (strain CDC 1551 / Oshkosh).